The sequence spans 330 residues: Phosphate acyltransferase (330 aa).

It belongs to the PlsX family. Homodimer. Probably interacts with PlsY.

The protein resides in the cytoplasm. The enzyme catalyses a fatty acyl-[ACP] + phosphate = an acyl phosphate + holo-[ACP]. Its pathway is lipid metabolism; phospholipid metabolism. Catalyzes the reversible formation of acyl-phosphate (acyl-PO(4)) from acyl-[acyl-carrier-protein] (acyl-ACP). This enzyme utilizes acyl-ACP as fatty acyl donor, but not acyl-CoA. In Streptococcus agalactiae serotype Ia (strain ATCC 27591 / A909 / CDC SS700), this protein is Phosphate acyltransferase.